A 228-amino-acid polypeptide reads, in one-letter code: A-type ATP synthase subunit D (228 aa).

Basic and acidic residues predominate over residues 205 to 214 (KKEEEEKAEA). Residues 205–228 (KKEEEEKAEAAAEAAAVEDPEPAD) form a disordered region.

It belongs to the V-ATPase D subunit family. In terms of assembly, has multiple subunits with at least A(3), B(3), C, D, E, F, H, I and proteolipid K(x).

It is found in the cell membrane. Its function is as follows. Component of the A-type ATP synthase that produces ATP from ADP in the presence of a proton gradient across the membrane. This chain is A-type ATP synthase subunit D, found in Halorubrum lacusprofundi (strain ATCC 49239 / DSM 5036 / JCM 8891 / ACAM 34).